The chain runs to 188 residues: Large ribosomal subunit protein bL32m (188 aa).

The Zn(2+) site is built by Cys-110, Cys-113, Cys-123, and Cys-126. The disordered stretch occupies residues 162–188 (GETPSEHDQGKRIIERERKRPSWFTQN). A compositionally biased stretch (basic and acidic residues) spans 165–181 (PSEHDQGKRIIERERKR).

It belongs to the bacterial ribosomal protein bL32 family. As to quaternary structure, component of the mitochondrial ribosome large subunit (39S) which comprises a 16S rRNA and about 50 distinct proteins. MRPL32 precursor is processed by the m-AAA protease (composed of AFG3L2 and SPG7), which cleaves the N-terminal transit peptide. Cleavage by the m-AAA protease takes place prior to assembly into the large subunit, an essential step for mitochondrial ribosome (mitoribosome) assembly. Proper processing by the m-AAA protease is dependent on the zinc-binding region within the tightly folded C-terminal domain of MRPL32: zinc-dependent folding halts degradation initiated from the N-terminus and triggers the release of mature MRPL32.

It is found in the mitochondrion. Component of the mitochondrial large ribosomal subunit (mt-LSU). The mitochondrial ribosome (mitoribosome) is a large ribonucleoprotein complex responsible for the synthesis of proteins inside mitochondria. The polypeptide is Large ribosomal subunit protein bL32m (MRPL32) (Bos taurus (Bovine)).